The primary structure comprises 216 residues: Ras-related protein Rab-11A (216 aa).

Position 2 is an N-acetylglycine (Gly2). GTP is bound by residues Ser20, Gly21, Val22, Gly23, Lys24, Ser25, Asn26, Asn37, Leu38, Ser40, Ser42, and Thr43. Ser25 provides a ligand contact to Mg(2+). Residues 36-47 (FNLESKSTIGVE) carry the Switch 1 motif. 2 residues coordinate Mg(2+): Thr43 and Asp66. Residues 67-86 (TAGQERYRAITSAYYRGAVG) carry the Switch 2 motif. GTP-binding residues include Gly69, Asn124, Lys125, Asp127, Ala155, and Leu156. The segment at 183 to 211 (DRRENDMSPSNNVVPIHVPPTTENKPKVQ) is disordered. S-geranylgeranyl cysteine attachment occurs at residues Cys212 and Cys213. Cys213 carries the post-translational modification Cysteine methyl ester. Residues 214 to 216 (QNI) constitute a propeptide, removed in mature form.

The protein belongs to the small GTPase superfamily. Rab family. Interacts (GTP-bound form) with RAB11FIPs (via their C-termini) including RAB11FIP1, RAB11FIP2, RAB11FIP3, RAB11FIP4 and RAB11FIP5 effectors. Forms a complex with RAB11FIP3 and dynein intermediate chain DYNC1LI1; the interaction between RAB11A1 and RAB11FIP3 is direct; the complex regulates endocytic trafficking. Interacts with EVI5; EVI5 and RAB11FIP3 may be mutually exclusive and compete for binding RAB11A. Interacts with SGSM1, SGSM2, SGSM3 and VIPAS39. Interacts with EXOC6 in a GTP-dependent manner. Interacts with RAB11FIP5. Interacts with STXBP6. Interacts (GDP-bound form) with ZFYVE27. Interacts with BIRC6/bruce. May interact with TBC1D14. Interacts with UNC119; in a cell cycle-dependent manner. GDP-bound and nucleotide-free forms interact with SH3BP5. Interacts (GDP-bound form) with KIF5A in a ZFYVE27-dependent manner. Interacts (GDP-bound form) with RELCH. Found in a complex composed of RELCH, OSBP1 and RAB11A. Interacts with TBC1D12. Interacts with DEF6. Interacts with ATP9A. Forms a heterotetramer with RAB11FIP3; the GTP-bound form is preferred for binding. Forms a complex with Rabin8/RAB3IP and RAB11FIP3, probably a heterohexamer with two of each protein subunit, where Rabin8/RAB3IP and RAB11FIP3 simultaneously bind to RAB11A; the complex promotes preciliary trafficking and cilia growth. Forms a complex containing RAB11A, ASAP1, Rabin8/RAB3IP, RAP11FIP3 and ARF4; the complex promotes preciliary trafficking; the complex binds to RHO in photoreceptor cells and promotes RHO ciliary transport. Interacts (GTP-bound form) with WDR44; the interaction prevents RAB11A-RAB3IP-RAB11FIP3 complex formation. Mg(2+) serves as cofactor. In terms of tissue distribution, detected in various tissues, such as brain, testis, spleen, and heart.

The protein resides in the cell membrane. It localises to the endosome membrane. The protein localises to the recycling endosome membrane. It is found in the cleavage furrow. Its subcellular location is the cytoplasmic vesicle. The protein resides in the phagosome. It localises to the cytoplasmic vesicle membrane. The protein localises to the golgi apparatus. It is found in the trans-Golgi network. It carries out the reaction GTP + H2O = GDP + phosphate + H(+). Regulated by guanine nucleotide exchange factors (GEFs) which promote the exchange of bound GDP for free GTP. Regulated by GTPase activating proteins (GAPs) which increase the GTP hydrolysis activity. Inhibited by GDP dissociation inhibitors (GDIs) which prevent Rab-GDP dissociation. The small GTPases Rab are key regulators of intracellular membrane trafficking, from the formation of transport vesicles to their fusion with membranes. Rabs cycle between an inactive GDP-bound form and an active GTP-bound form that is able to recruit to membranes different set of downstream effectors directly responsible for vesicle formation, movement, tethering and fusion. The small Rab GTPase RAB11A regulates endocytic recycling. Forms a functional Rab11/RAB11FIP3/dynein complex that regulates the movement of peripheral sorting endosomes (SE) along microtubule tracks toward the microtubule organizing center/centrosome, generating the endosomal recycling compartment (ERC). Acts as a major regulator of membrane delivery during cytokinesis. Together with MYO5B and RAB8A participates in epithelial cell polarization. Together with Rabin8/RAB3IP, RAB8A, the exocyst complex, PARD3, PRKCI, ANXA2, CDC42 and DNMBP promotes transcytosis of PODXL to the apical membrane initiation sites (AMIS), apical surface formation and lumenogenesis. Together with MYO5B participates in CFTR trafficking to the plasma membrane and TF (Transferrin) recycling in nonpolarized cells. Required in a complex with MYO5B and RAB11FIP2 for the transport of NPC1L1 to the plasma membrane. Participates in the sorting and basolateral transport of CDH1 from the Golgi apparatus to the plasma membrane. Regulates the recycling of FCGRT (receptor of Fc region of monomeric IgG) to basolateral membranes. May also play a role in melanosome transport and release from melanocytes. Promotes Rabin8/RAB3IP preciliary vesicular trafficking to mother centriole by forming a ciliary targeting complex containing Rab11, ASAP1, Rabin8/RAB3IP, RAB11FIP3 and ARF4, thereby regulating ciliogenesis initiation. On the contrary, upon LPAR1 receptor signaling pathway activation, interaction with phosphorylated WDR44 prevents Rab11-RAB3IP-RAB11FIP3 complex formation and cilia growth. Participates in the export of a subset of neosynthesized proteins through a Rab8-Rab10-Rab11-endososomal dependent export route via interaction with WDR44. In Rattus norvegicus (Rat), this protein is Ras-related protein Rab-11A.